The sequence spans 507 residues: ATP synthase subunit alpha, chloroplastic (507 aa).

170-177 contacts ATP; sequence GDRQTGKT.

The protein belongs to the ATPase alpha/beta chains family. In terms of assembly, F-type ATPases have 2 components, CF(1) - the catalytic core - and CF(0) - the membrane proton channel. CF(1) has five subunits: alpha(3), beta(3), gamma(1), delta(1), epsilon(1). CF(0) has four main subunits: a, b, b' and c.

It localises to the plastid. Its subcellular location is the chloroplast thylakoid membrane. It carries out the reaction ATP + H2O + 4 H(+)(in) = ADP + phosphate + 5 H(+)(out). Produces ATP from ADP in the presence of a proton gradient across the membrane. The alpha chain is a regulatory subunit. The polypeptide is ATP synthase subunit alpha, chloroplastic (Cucumis sativus (Cucumber)).